Consider the following 123-residue polypeptide: Small ribosomal subunit protein uS12 (123 aa).

3-methylthioaspartic acid is present on Asp89.

This sequence belongs to the universal ribosomal protein uS12 family. As to quaternary structure, part of the 30S ribosomal subunit. Contacts proteins S8 and S17. May interact with IF1 in the 30S initiation complex.

In terms of biological role, with S4 and S5 plays an important role in translational accuracy. Interacts with and stabilizes bases of the 16S rRNA that are involved in tRNA selection in the A site and with the mRNA backbone. Located at the interface of the 30S and 50S subunits, it traverses the body of the 30S subunit contacting proteins on the other side and probably holding the rRNA structure together. The combined cluster of proteins S8, S12 and S17 appears to hold together the shoulder and platform of the 30S subunit. In Bartonella tribocorum (strain CIP 105476 / IBS 506), this protein is Small ribosomal subunit protein uS12.